An 880-amino-acid polypeptide reads, in one-letter code: Leucine--tRNA ligase (880 aa).

A 'HIGH' region motif is present at residues 49–59; sequence PYPSGRIHMGH. The short motif at 638 to 642 is the 'KMSKS' region element; the sequence is KMSKS. Residue lysine 641 participates in ATP binding.

Belongs to the class-I aminoacyl-tRNA synthetase family.

The protein localises to the cytoplasm. It catalyses the reaction tRNA(Leu) + L-leucine + ATP = L-leucyl-tRNA(Leu) + AMP + diphosphate. This Bartonella henselae (strain ATCC 49882 / DSM 28221 / CCUG 30454 / Houston 1) (Rochalimaea henselae) protein is Leucine--tRNA ligase.